Reading from the N-terminus, the 599-residue chain is Elongation factor 4 (599 aa).

A tr-type G domain is found at 2–184 (KNIRNFSIIA…RLVRDIPPPE (183 aa)). Residues 14 to 19 (DHGKST) and 131 to 134 (NKID) contribute to the GTP site.

Belongs to the TRAFAC class translation factor GTPase superfamily. Classic translation factor GTPase family. LepA subfamily.

Its subcellular location is the cell inner membrane. It catalyses the reaction GTP + H2O = GDP + phosphate + H(+). Functionally, required for accurate and efficient protein synthesis under certain stress conditions. May act as a fidelity factor of the translation reaction, by catalyzing a one-codon backward translocation of tRNAs on improperly translocated ribosomes. Back-translocation proceeds from a post-translocation (POST) complex to a pre-translocation (PRE) complex, thus giving elongation factor G a second chance to translocate the tRNAs correctly. Binds to ribosomes in a GTP-dependent manner. This Escherichia coli (strain UTI89 / UPEC) protein is Elongation factor 4.